A 279-amino-acid polypeptide reads, in one-letter code: Biotin synthase (279 aa).

The Radical SAM core domain occupies 2-232 (VRNSRLDICS…NVTIKIAAGR (231 aa)). Residues Cys20, Cys24, and Cys27 each coordinate [4Fe-4S] cluster. Cys96, Cys156, and Lys227 together coordinate [2Fe-2S] cluster.

Belongs to the radical SAM superfamily. Biotin synthase family. As to quaternary structure, homodimer. The cofactor is [4Fe-4S] cluster. [2Fe-2S] cluster serves as cofactor.

The catalysed reaction is (4R,5S)-dethiobiotin + (sulfur carrier)-SH + 2 reduced [2Fe-2S]-[ferredoxin] + 2 S-adenosyl-L-methionine = (sulfur carrier)-H + biotin + 2 5'-deoxyadenosine + 2 L-methionine + 2 oxidized [2Fe-2S]-[ferredoxin]. It participates in cofactor biosynthesis; biotin biosynthesis; biotin from 7,8-diaminononanoate: step 2/2. Functionally, catalyzes the conversion of dethiobiotin (DTB) to biotin by the insertion of a sulfur atom into dethiobiotin via a radical-based mechanism. The protein is Biotin synthase of Thermotoga neapolitana (strain ATCC 49049 / DSM 4359 / NBRC 107923 / NS-E).